Reading from the N-terminus, the 388-residue chain is Succinate--CoA ligase [ADP-forming] subunit beta (388 aa).

The ATP-grasp domain maps to 9–244; the sequence is KQIFAQYGLP…PSQEDAREAA (236 aa). Residues K46, 53–55, E99, A102, and E107 contribute to the ATP site; that span reads GRG. The Mg(2+) site is built by N199 and D213. Substrate-binding positions include N264 and 321 to 323; that span reads GIV.

It belongs to the succinate/malate CoA ligase beta subunit family. As to quaternary structure, heterotetramer of two alpha and two beta subunits. The cofactor is Mg(2+).

It carries out the reaction succinate + ATP + CoA = succinyl-CoA + ADP + phosphate. It catalyses the reaction GTP + succinate + CoA = succinyl-CoA + GDP + phosphate. It functions in the pathway carbohydrate metabolism; tricarboxylic acid cycle; succinate from succinyl-CoA (ligase route): step 1/1. Its function is as follows. Succinyl-CoA synthetase functions in the citric acid cycle (TCA), coupling the hydrolysis of succinyl-CoA to the synthesis of either ATP or GTP and thus represents the only step of substrate-level phosphorylation in the TCA. The beta subunit provides nucleotide specificity of the enzyme and binds the substrate succinate, while the binding sites for coenzyme A and phosphate are found in the alpha subunit. This chain is Succinate--CoA ligase [ADP-forming] subunit beta, found in Mannheimia succiniciproducens (strain KCTC 0769BP / MBEL55E).